The sequence spans 259 residues: uncharacterized protein (259 aa).

The region spanning 19 to 249 is the Radical SAM core domain; sequence TKIPGAKYVI…DEVINTIKKK (231 aa). 3 residues coordinate [4Fe-4S] cluster: C34, C38, and C41.

The cofactor is [4Fe-4S] cluster.

This is an uncharacterized protein from Methanocaldococcus jannaschii (strain ATCC 43067 / DSM 2661 / JAL-1 / JCM 10045 / NBRC 100440) (Methanococcus jannaschii).